A 409-amino-acid polypeptide reads, in one-letter code: Serine/threonine transporter SstT (409 aa).

9 helical membrane passes run 14 to 34, 57 to 77, 89 to 109, 149 to 169, 190 to 210, 224 to 244, 296 to 316, 338 to 358, and 365 to 385; these read GNLI…GFIA, GALK…SIII, IIIL…VVSF, AISS…GIAL, IVKF…ATSV, LLLV…AAIV, ISIP…IAVL, IIAA…LMLI, and FGIS…IGVV.

It belongs to the dicarboxylate/amino acid:cation symporter (DAACS) (TC 2.A.23) family.

It localises to the cell inner membrane. The enzyme catalyses L-serine(in) + Na(+)(in) = L-serine(out) + Na(+)(out). It catalyses the reaction L-threonine(in) + Na(+)(in) = L-threonine(out) + Na(+)(out). Its function is as follows. Involved in the import of serine and threonine into the cell, with the concomitant import of sodium (symport system). The protein is Serine/threonine transporter SstT of Campylobacter fetus subsp. fetus (strain 82-40).